Consider the following 376-residue polypeptide: Queuine tRNA-ribosyltransferase (376 aa).

Catalysis depends on Asp93, which acts as the Proton acceptor. Substrate-binding positions include 93–97, Asp147, Gln190, and Gly217; that span reads DSGGF. The RNA binding stretch occupies residues 248 to 254; the sequence is GVGTPDD. Asp267 functions as the Nucleophile in the catalytic mechanism. An RNA binding; important for wobble base 34 recognition region spans residues 272–276; that stretch reads TRAGR.

The protein belongs to the queuine tRNA-ribosyltransferase family. As to quaternary structure, homodimer. Within each dimer, one monomer is responsible for RNA recognition and catalysis, while the other monomer binds to the replacement base PreQ1.

It carries out the reaction 7-aminomethyl-7-carbaguanine + guanosine(34) in tRNA = 7-aminomethyl-7-carbaguanosine(34) in tRNA + guanine. Its pathway is tRNA modification; tRNA-queuosine biosynthesis. Its function is as follows. Catalyzes the base-exchange of a guanine (G) residue with the queuine precursor 7-aminomethyl-7-deazaguanine (PreQ1) at position 34 (anticodon wobble position) in tRNAs with GU(N) anticodons (tRNA-Asp, -Asn, -His and -Tyr). Catalysis occurs through a double-displacement mechanism. The nucleophile active site attacks the C1' of nucleotide 34 to detach the guanine base from the RNA, forming a covalent enzyme-RNA intermediate. The proton acceptor active site deprotonates the incoming PreQ1, allowing a nucleophilic attack on the C1' of the ribose to form the product. After dissociation, two additional enzymatic reactions on the tRNA convert PreQ1 to queuine (Q), resulting in the hypermodified nucleoside queuosine (7-(((4,5-cis-dihydroxy-2-cyclopenten-1-yl)amino)methyl)-7-deazaguanosine). This Mesorhizobium japonicum (strain LMG 29417 / CECT 9101 / MAFF 303099) (Mesorhizobium loti (strain MAFF 303099)) protein is Queuine tRNA-ribosyltransferase.